The following is a 179-amino-acid chain: Large ribosomal subunit protein uL5 (179 aa).

This sequence belongs to the universal ribosomal protein uL5 family. In terms of assembly, part of the 50S ribosomal subunit; part of the 5S rRNA/L5/L18/L25 subcomplex. Contacts the 5S rRNA and the P site tRNA. Forms a bridge to the 30S subunit in the 70S ribosome.

In terms of biological role, this is one of the proteins that bind and probably mediate the attachment of the 5S RNA into the large ribosomal subunit, where it forms part of the central protuberance. In the 70S ribosome it contacts protein S13 of the 30S subunit (bridge B1b), connecting the 2 subunits; this bridge is implicated in subunit movement. Contacts the P site tRNA; the 5S rRNA and some of its associated proteins might help stabilize positioning of ribosome-bound tRNAs. This chain is Large ribosomal subunit protein uL5, found in Xylella fastidiosa (strain M12).